The sequence spans 397 residues: 2,6-dihydroxypyridine 3-monooxygenase (397 aa).

FAD is bound by residues 14–16 (SIS), 35–36 (ER), V49, L120, D306, and 316–320 (AAGGA).

In terms of assembly, homodimer. Requires FAD as cofactor.

The catalysed reaction is 2,6-dihydroxypyridine + NADH + O2 + H(+) = 2,3,6-trihydroxypyridine + NAD(+) + H2O. The protein operates within alkaloid degradation; nicotine degradation. Functionally, catalyzes the conversion of 2,6-dihydroxypyridine into 2,3,6-trihydroxypyridine in the nicotine degradation pathway. This chain is 2,6-dihydroxypyridine 3-monooxygenase (dhpH), found in Paenarthrobacter nicotinovorans (Arthrobacter nicotinovorans).